Consider the following 148-residue polypeptide: Proline-rich nuclear receptor coactivator 2 (148 aa).

The tract at residues 1-69 (MGGGERYNIP…WSPEARQAVS (69 aa)) is disordered. The SH3-binding motif lies at 109–115 (SEPPSPS).

The protein belongs to the PNRC family. PNRC2 subfamily.

The protein localises to the nucleus. It is found in the cytoplasm. Its subcellular location is the P-body. Involved in nonsense-mediated mRNA decay (NMD) by acting as a bridge between the mRNA decapping complex and the NMD machinery. May act by targeting the NMD machinery to the P-body and recruiting the decapping machinery to aberrant mRNAs. Required for upf1/rent1 localization to the P-body. Also acts as a nuclear receptor coactivator. This is Proline-rich nuclear receptor coactivator 2 (pnrc2) from Danio rerio (Zebrafish).